The chain runs to 125 residues: Apoptosis inhibitor Rv3655c (125 aa).

An N-terminal signal peptide occupies residues 1 to 33; sequence MEAALAIATLVLVLVLCLAGVTAVSMQVRCIDA.

In terms of assembly, interacts with human E3 ubiquitin-protein ligase RNF213.

It is found in the secreted. It localises to the host cytoplasm. Effector protein that participates in the suppression of macrophage apoptosis by blocking the extrinsic pathway. Interferes with caspase-8 activation and binds to the host E3 ubiquitin-protein ligase RNF213, whose fusion partners have anti-apoptotic function. This is Apoptosis inhibitor Rv3655c from Mycobacterium tuberculosis (strain ATCC 25618 / H37Rv).